The primary structure comprises 132 residues: Agouti-signaling protein (132 aa).

A signal peptide spans 1-22 (MDVTRLLLATLLVFLCFFTANS). The N-linked (GlcNAc...) asparagine glycan is linked to N39. The tract at residues 62-85 (IGRKAAEKKRSSKKEASMKKVVRP) is disordered. Over residues 65 to 79 (KAAEKKRSSKKEASM) the composition is skewed to basic and acidic residues. Intrachain disulfides connect C93–C108, C100–C114, C107–C125, C111–C132, and C116–C123. The Agouti domain occupies 93 to 132 (CVATRNSCKPPAPACCDPCASCQCRFFRSACSCRVLSLNC).

As to expression, widely expressed at low levels. Highly expressed in the skin. Expressed in adipose tissue.

Its subcellular location is the secreted. Functionally, involved in the regulation of melanogenesis. The binding of ASP to MC1R precludes alpha-MSH initiated signaling and thus blocks production of cAMP, leading to a down-regulation of eumelanogenesis (brown/black pigment) and thus increasing synthesis of pheomelanin (yellow/red pigment). In higher primates, agouti may affect the quality of hair pigmentation rather than its pattern of deposition. Could well play a role in neuroendocrine aspects of melanocortin action. May have some functional role in regulating the lipid metabolism with adipocytes. The protein is Agouti-signaling protein (ASIP) of Homo sapiens (Human).